We begin with the raw amino-acid sequence, 195 residues long: ATP-dependent Clp protease proteolytic subunit (195 aa).

Serine 97 serves as the catalytic Nucleophile. Histidine 122 is a catalytic residue.

Belongs to the peptidase S14 family. In terms of assembly, fourteen ClpP subunits assemble into 2 heptameric rings which stack back to back to give a disk-like structure with a central cavity, resembling the structure of eukaryotic proteasomes.

Its subcellular location is the cytoplasm. The catalysed reaction is Hydrolysis of proteins to small peptides in the presence of ATP and magnesium. alpha-casein is the usual test substrate. In the absence of ATP, only oligopeptides shorter than five residues are hydrolyzed (such as succinyl-Leu-Tyr-|-NHMec, and Leu-Tyr-Leu-|-Tyr-Trp, in which cleavage of the -Tyr-|-Leu- and -Tyr-|-Trp bonds also occurs).. Cleaves peptides in various proteins in a process that requires ATP hydrolysis. Has a chymotrypsin-like activity. Plays a major role in the degradation of misfolded proteins. This is ATP-dependent Clp protease proteolytic subunit from Lactobacillus gasseri (strain ATCC 33323 / DSM 20243 / BCRC 14619 / CIP 102991 / JCM 1131 / KCTC 3163 / NCIMB 11718 / NCTC 13722 / AM63).